The primary structure comprises 99 residues: Cytochrome c2 iso-1 (99 aa).

4 residues coordinate heme c: C10, C13, H14, and M75.

It belongs to the cytochrome c family. Post-translationally, binds 1 heme c group covalently per subunit.

Cytochrome c2 is found mainly in purple, non-sulfur, photosynthetic bacteria where it functions as the electron donor to the oxidized bacteriochlorophyll in the photophosphorylation pathway. However, it may also have a role in the respiratory chain and is found in some non-photosynthetic bacteria. The protein is Cytochrome c2 iso-1 of Magnetospirillum fulvum (Rhodospirillum fulvum).